Consider the following 122-residue polypeptide: Fluoride-specific ion channel FluC (122 aa).

Transmembrane regions (helical) follow at residues 4-24 (ILLIGLGGFFGAILRYLVSGI), 36-56 (LIVNLLGSFIIGFLIYSSLFG), 65-85 (FIITGFCGALTTFSTFSYESF), and 100-120 (ILLNVFGCLGMVYLGRLASMF). Na(+)-binding residues include G72 and T75.

This sequence belongs to the fluoride channel Fluc/FEX (TC 1.A.43) family.

It is found in the cell membrane. The catalysed reaction is fluoride(in) = fluoride(out). Its activity is regulated as follows. Na(+) is not transported, but it plays an essential structural role and its presence is essential for fluoride channel function. In terms of biological role, fluoride-specific ion channel. Important for reducing fluoride concentration in the cell, thus reducing its toxicity. The chain is Fluoride-specific ion channel FluC from Methanococcus maripaludis (strain DSM 14266 / JCM 13030 / NBRC 101832 / S2 / LL).